The following is a 122-amino-acid chain: MPTINQLIRKKRKSTGKKRTAPALEKCPQRRGVCTRVSTTTPKKPNSALRKIARVRLTNGMEVTAYIPGIGHNLQEHSVVLVRGGRVKDLPGVRYQVVRGALDTAGVEDRAQGRSKYGTKKG.

The tract at residues 1–24 is disordered; the sequence is MPTINQLIRKKRKSTGKKRTAPAL. Positions 8–20 are enriched in basic residues; it reads IRKKRKSTGKKRT. Aspartate 89 carries the post-translational modification 3-methylthioaspartic acid.

This sequence belongs to the universal ribosomal protein uS12 family. In terms of assembly, part of the 30S ribosomal subunit. Contacts proteins S8 and S17. May interact with IF1 in the 30S initiation complex.

In terms of biological role, with S4 and S5 plays an important role in translational accuracy. Its function is as follows. Interacts with and stabilizes bases of the 16S rRNA that are involved in tRNA selection in the A site and with the mRNA backbone. Located at the interface of the 30S and 50S subunits, it traverses the body of the 30S subunit contacting proteins on the other side and probably holding the rRNA structure together. The combined cluster of proteins S8, S12 and S17 appears to hold together the shoulder and platform of the 30S subunit. This is Small ribosomal subunit protein uS12 from Natranaerobius thermophilus (strain ATCC BAA-1301 / DSM 18059 / JW/NM-WN-LF).